A 277-amino-acid polypeptide reads, in one-letter code: Caspase-3 (277 aa).

Met-1 bears the N-acetylmethionine mark. 2 consecutive propeptides follow at residues 1 to 9 and 10 to 28; these read MDNNETSVD and SKSI…KSMD. An N6-acetyllysine modification is found at Lys-11. Ser-26 carries the post-translational modification Phosphoserine. Active-site residues include His-121 and Cys-163. Cys-163 carries the S-nitrosocysteine; in inhibited form modification.

The protein belongs to the peptidase C14A family. As to quaternary structure, heterotetramer that consists of two anti-parallel arranged heterodimers, each one formed by a 17 kDa (p17) and a 12 kDa (p12) subunit. Interacts with BIRC6/bruce. Cleavage by granzyme B, caspase-6, caspase-8 and caspase-10 generates the two active subunits. Additional processing of the propeptides is likely due to the autocatalytic activity of the activated protease. Active heterodimers between the small subunit of caspase-7 protease and the large subunit of caspase-3 also occur and vice versa. Post-translationally, S-nitrosylated on its catalytic site cysteine in unstimulated cell lines and denitrosylated upon activation of the Fas apoptotic pathway, associated with an increase in intracellular caspase activity. Fas therefore activates caspase-3 not only by inducing the cleavage of the caspase zymogen to its active subunits, but also by stimulating the denitrosylation of its active site thiol. In terms of processing, ubiquitinated by BIRC6; this activity is inhibited by DIABLO/SMAC. As to expression, expressed in heart, brain, liver, and muscle but not in kidney or testis.

It is found in the cytoplasm. The catalysed reaction is Strict requirement for an Asp residue at positions P1 and P4. It has a preferred cleavage sequence of Asp-Xaa-Xaa-Asp-|- with a hydrophobic amino-acid residue at P2 and a hydrophilic amino-acid residue at P3, although Val or Ala are also accepted at this position.. With respect to regulation, inhibited by BIRC6; following inhibition of BIRC6-caspase binding by DIABLO/SMAC, BIRC6 is subjected to caspase cleavage, leading to an increase in active caspases. In terms of biological role, involved in the activation cascade of caspases responsible for apoptosis execution. At the onset of apoptosis, it proteolytically cleaves poly(ADP-ribose) polymerase PARP1 at a '216-Asp-|-Gly-217' bond. Cleaves and activates sterol regulatory element binding proteins (SREBPs) between the basic helix-loop-helix leucine zipper domain and the membrane attachment domain. Cleaves and activates caspase-6, -7 and -9 (CASP6, CASP7 and CASP9, respectively). Cleaves and inactivates interleukin-18 (IL18). Triggers cell adhesion in sympathetic neurons through RET cleavage. Cleaves IL-1 beta between an Asp and an Ala, releasing the mature cytokine which is involved in a variety of inflammatory processes. Cleaves and inhibits serine/threonine-protein kinase AKT1 in response to oxidative stress. Acts as an inhibitor of type I interferon production during virus-induced apoptosis by mediating cleavage of antiviral proteins CGAS, IRF3 and MAVS, thereby preventing cytokine overproduction. Also involved in pyroptosis by mediating cleavage and activation of gasdermin-E (GSDME). Cleaves XRCC4 and phospholipid scramblase proteins XKR4, XKR8 and XKR9, leading to promote phosphatidylserine exposure on apoptotic cell surface. Cleaves BIRC6 following inhibition of BIRC6-caspase binding by DIABLO/SMAC. The chain is Caspase-3 (Casp3) from Rattus norvegicus (Rat).